A 151-amino-acid chain; its full sequence is Phosphopantetheine adenylyltransferase (151 aa).

Ser9 contacts substrate. Residues 9-10 (SF) and His17 contribute to the ATP site. Substrate contacts are provided by Lys41, Thr73, and Arg87. ATP is bound by residues 88-90 (GLR), Glu98, and 122-128 (TSFISSS).

Belongs to the bacterial CoaD family. Homohexamer. Mg(2+) serves as cofactor.

The protein resides in the cytoplasm. It carries out the reaction (R)-4'-phosphopantetheine + ATP + H(+) = 3'-dephospho-CoA + diphosphate. It functions in the pathway cofactor biosynthesis; coenzyme A biosynthesis; CoA from (R)-pantothenate: step 4/5. Its function is as follows. Reversibly transfers an adenylyl group from ATP to 4'-phosphopantetheine, yielding dephospho-CoA (dPCoA) and pyrophosphate. In Flavobacterium psychrophilum (strain ATCC 49511 / DSM 21280 / CIP 103535 / JIP02/86), this protein is Phosphopantetheine adenylyltransferase.